Consider the following 490-residue polypeptide: Betaine aldehyde dehydrogenase (490 aa).

The K(+) site is built by isoleucine 27 and aspartate 93. An NAD(+)-binding site is contributed by 150–152 (GAW). The active-site Charge relay system is the lysine 162. An NAD(+)-binding site is contributed by 176-179 (KPSE). Valine 180 serves as a coordination point for K(+). 230 to 233 (GTTT) lines the NAD(+) pocket. Leucine 246 lines the K(+) pocket. Glutamate 252 functions as the Proton acceptor in the catalytic mechanism. 3 residues coordinate NAD(+): glycine 254, cysteine 286, and glutamate 387. Cysteine 286 functions as the Nucleophile in the catalytic mechanism. At cysteine 286 the chain carries Cysteine sulfenic acid (-SOH). Positions 457 and 460 each coordinate K(+). Catalysis depends on glutamate 464, which acts as the Charge relay system.

Belongs to the aldehyde dehydrogenase family. In terms of assembly, dimer of dimers. Requires K(+) as cofactor.

The catalysed reaction is betaine aldehyde + NAD(+) + H2O = glycine betaine + NADH + 2 H(+). Its pathway is amine and polyamine biosynthesis; betaine biosynthesis via choline pathway; betaine from betaine aldehyde: step 1/1. Its function is as follows. Involved in the biosynthesis of the osmoprotectant glycine betaine. Catalyzes the irreversible oxidation of betaine aldehyde to the corresponding acid. This chain is Betaine aldehyde dehydrogenase, found in Pseudomonas putida (strain ATCC 700007 / DSM 6899 / JCM 31910 / BCRC 17059 / LMG 24140 / F1).